Consider the following 520-residue polypeptide: MSSTVWILISILLATVGAVVGFFVRKSIAEAKINGAANEAKRILDEANREAEALKKEALLEAKDEIHTLRTEAELEIRDRRSELQKQENRLMQKEENLDRKDETLDKRELQLEKKEDSLVARQQQIEELESKVGELVQKQQTELERISNLTREQAKAIILGKVESEVSHEIAVMVKESEVRAKEEADKKAKEILSLAMQRCAADHVAETTVSVVNLPNDEMKGRIIGREGRNIRTLETLTGIDLIIDDTPEAVILSGFDPIRRETARIALDKLVQDGRIHPARIEEMVEKSRREVDEYIREVGEQTTFEVGVHGLHPDLIKILGRLKYRTSYGQNVLKHSMEVAYLTGLMAAELGEDEKLARRAGLLHDIGKAIDHEVEGSHVEIGVELATKYKEHPVVINSIASHHGDTEPTSIIAVLVAAADALSAARPGARSETLENYIRRLEKLEEISESYEGVEKSFAIQAGREVRILVKPDTIDDLEAHRLARDIRKRIENELDYPGHIKVTVIRETRAVEYAK.

A helical membrane pass occupies residues 4–24 (TVWILISILLATVGAVVGFFV). The region spanning 210 to 273 (TVSVVNLPND…ETARIALDKL (64 aa)) is the KH domain. The HD domain maps to 336–429 (VLKHSMEVAY…VAAADALSAA (94 aa)).

It belongs to the RNase Y family.

The protein resides in the cell membrane. Functionally, endoribonuclease that initiates mRNA decay. This chain is Ribonuclease Y, found in Bacillus cereus (strain ZK / E33L).